The primary structure comprises 140 residues: Large-conductance mechanosensitive channel 3 (140 aa).

The next 3 helical transmembrane spans lie at 8–28, 30–50, and 81–101; these read FISKGNVMDLAVGVIIGAAFG, IVTSLVDDVIMPIFGAIFGGL, and GSFITAVLNFLILAFIIFLMV.

Belongs to the MscL family. In terms of assembly, homopentamer.

Its subcellular location is the cell inner membrane. In terms of biological role, channel that opens in response to stretch forces in the membrane lipid bilayer. May participate in the regulation of osmotic pressure changes within the cell. The chain is Large-conductance mechanosensitive channel 3 from Mesorhizobium japonicum (strain LMG 29417 / CECT 9101 / MAFF 303099) (Mesorhizobium loti (strain MAFF 303099)).